Reading from the N-terminus, the 200-residue chain is Probable molybdenum cofactor guanylyltransferase (200 aa).

GTP is bound by residues 9–11 (LAG), Lys21, Asp69, and Asp100. A Mg(2+)-binding site is contributed by Asp100.

It belongs to the MobA family. The cofactor is Mg(2+).

It is found in the cytoplasm. The enzyme catalyses Mo-molybdopterin + GTP + H(+) = Mo-molybdopterin guanine dinucleotide + diphosphate. Functionally, transfers a GMP moiety from GTP to Mo-molybdopterin (Mo-MPT) cofactor (Moco or molybdenum cofactor) to form Mo-molybdopterin guanine dinucleotide (Mo-MGD) cofactor. The chain is Probable molybdenum cofactor guanylyltransferase from Bacillus mycoides (strain KBAB4) (Bacillus weihenstephanensis).